Reading from the N-terminus, the 401-residue chain is Ascaroside receptor GPR3 (401 aa).

Residues 1 to 16 (MQPFGDAWSQRHLAGV) lie on the Extracellular side of the membrane. The helical transmembrane segment at 17-37 (VLAGSVLSIVGSLYMILGFFF) threads the bilayer. At 38 to 47 (LRECRSFRHK) the chain is on the cytoplasmic side. Residues 48–68 (LILGLAVSDLLLALNFFIPSL) traverse the membrane as a helical segment. Residues 69–93 (SMVTGREISSPWNEGFCSANGFLMQ) lie on the Extracellular side of the membrane. The cysteines at positions 85 and 159 are disulfide-linked. Residues 94 to 114 (LFFAQIDVWQISIALITLLML) form a helical membrane-spanning segment. Over 115–128 (SGPSMVLKWIRENV) the chain is Cytoplasmic. Residues 129-149 (WAVWLFPWLVSLIAAFFAFGF) traverse the membrane as a helical segment. Over 150-175 (WDYANVGGFCWLGSRNIRLYFNYIPR) the chain is Extracellular. A helical membrane pass occupies residues 176-196 (WIIILVCLVIYIAVYRLILHA). Topologically, residues 197–294 (RRRANIQKTY…QKQVRKIAIQ (98 aa)) are cytoplasmic. The segment at 206-259 (YRGRASDRAPPQPVTTTAPATNPESEKVNPDEISSGNGSSSLDTSRSGSSTGFT) is disordered. Residues 239–257 (SSGNGSSSLDTSRSGSSTG) show a composition bias toward low complexity. A helical membrane pass occupies residues 295-315 (MISYPLAYAVLWAIPTIVMII). Over 316–321 (QVARGG) the chain is Extracellular. A helical transmembrane segment spans residues 322-342 (EGVSIHVEGLAKMLLVFNGFV). Residues 343 to 401 (DAHVYGFNERTAMGWRQRIRPAAQEDDEEAAGTSGGVHEVVSRPEPTLKNPNVWQQNMV) lie on the Cytoplasmic side of the membrane. A disordered region spans residues 362–401 (RPAAQEDDEEAAGTSGGVHEVVSRPEPTLKNPNVWQQNMV). Residues 391 to 401 (KNPNVWQQNMV) show a composition bias toward polar residues.

Belongs to the G-protein coupled receptor 1 family. In terms of assembly, interacts with ascaroside receptor GPR2; may form a functional heterodimer. Interacts with guanine nucleotide-binding protein alpha GPA2; to activate adenylate cyclase and positively regulate nematode trap formation.

The protein resides in the cell membrane. Its function is as follows. G protein-coupled receptor that senses nematode ascaroside pheromones and signals via adenylate cyclase to positively regulate trap formation for nematode capture. The sequence is that of Ascaroside receptor GPR3 from Arthrobotrys oligospora (strain ATCC 24927 / CBS 115.81 / DSM 1491) (Nematode-trapping fungus).